Reading from the N-terminus, the 547-residue chain is Chaperonin GroEL (547 aa).

ATP-binding positions include 30-33 (TLGP), Lys51, 87-91 (DGTTT), Gly415, 480-482 (NAA), and Asp496. The interval 525–547 (KPDDKPAMPPMGGGMGGMGGMDF) is disordered. Residues 535 to 547 (MGGGMGGMGGMDF) show a composition bias toward gly residues.

This sequence belongs to the chaperonin (HSP60) family. As to quaternary structure, forms a cylinder of 14 subunits composed of two heptameric rings stacked back-to-back. Interacts with the co-chaperonin GroES.

The protein localises to the cytoplasm. It catalyses the reaction ATP + H2O + a folded polypeptide = ADP + phosphate + an unfolded polypeptide.. Its function is as follows. Together with its co-chaperonin GroES, plays an essential role in assisting protein folding. The GroEL-GroES system forms a nano-cage that allows encapsulation of the non-native substrate proteins and provides a physical environment optimized to promote and accelerate protein folding. The protein is Chaperonin GroEL of Novosphingobium aromaticivorans (strain ATCC 700278 / DSM 12444 / CCUG 56034 / CIP 105152 / NBRC 16084 / F199).